Reading from the N-terminus, the 217-residue chain is Probable GTP-binding protein EngB (217 aa).

The 178-residue stretch at 37 to 214 (SGLEVAFAGR…RAAMARLIGD (178 aa)) folds into the EngB-type G domain. Residues 45–52 (GRSNVGKS), 72–76 (GRTQE), 92–95 (DMPG), 159–162 (TKAD), and 193–195 (TSS) each bind GTP. S52 and T74 together coordinate Mg(2+).

It belongs to the TRAFAC class TrmE-Era-EngA-EngB-Septin-like GTPase superfamily. EngB GTPase family. It depends on Mg(2+) as a cofactor.

In terms of biological role, necessary for normal cell division and for the maintenance of normal septation. This chain is Probable GTP-binding protein EngB, found in Nitrobacter winogradskyi (strain ATCC 25391 / DSM 10237 / CIP 104748 / NCIMB 11846 / Nb-255).